Consider the following 1144-residue polypeptide: Type II inositol polyphosphate 5-phosphatase 14 (1144 aa).

Disordered stretches follow at residues 15-67 (ASLV…FDSS) and 81-118 (GRTS…DDIE). 5 WD repeats span residues 158 to 196 (ETQT…EVGC), 216 to 255 (VPTS…TTTA), 269 to 307 (AHRG…KSLV), 445 to 483 (EDTR…LREV), and 524 to 561 (SHNE…PLDS). 2 catalytic regions span residues 791-807 (DLVA…FGIT) and 870-885 (KKRI…YRDN). K949 participates in a covalent cross-link: Glycyl lysine isopeptide (Lys-Gly) (interchain with G-Cter in ubiquitin). Over residues 1111–1131 (TTMTKNLEGSTRYQTDANRGG) the composition is skewed to polar residues. Residues 1111-1144 (TTMTKNLEGSTRYQTDANRGGSTRHRTDDSTRRG) form a disordered region. The segment covering 1135-1144 (HRTDDSTRRG) has biased composition (basic and acidic residues).

The protein belongs to the inositol polyphosphate 5-phosphatase family. The cofactor is Mg(2+). In terms of tissue distribution, expressed in young seedlings and flowers.

It carries out the reaction a 1,2-diacyl-sn-glycero-3-phospho-(1D-myo-inositol-4,5-bisphosphate) + H2O = a 1,2-diacyl-sn-glycero-3-phospho-(1D-myo-inositol 4-phosphate) + phosphate. The catalysed reaction is a 1,2-diacyl-sn-glycero-3-phospho-(1D-myo-inositol-3,4,5-trisphosphate) + H2O = a 1,2-diacyl-sn-glycero-3-phospho-(1D-myo-inositol-3,4-bisphosphate) + phosphate. It catalyses the reaction 1D-myo-inositol 1,4,5-trisphosphate + H2O = 1D-myo-inositol 1,4-bisphosphate + phosphate. Functionally, has phosphatase activity toward PtdIns(4,5)P2, PtdIns(3,4,5)P3 and Ins(1,4,5)P3. This Arabidopsis thaliana (Mouse-ear cress) protein is Type II inositol polyphosphate 5-phosphatase 14.